A 156-amino-acid chain; its full sequence is Small ribosomal subunit protein uS7 (156 aa).

It belongs to the universal ribosomal protein uS7 family. As to quaternary structure, part of the 30S ribosomal subunit. Contacts proteins S9 and S11.

Its function is as follows. One of the primary rRNA binding proteins, it binds directly to 16S rRNA where it nucleates assembly of the head domain of the 30S subunit. Is located at the subunit interface close to the decoding center, probably blocks exit of the E-site tRNA. The polypeptide is Small ribosomal subunit protein uS7 (Chlorobaculum tepidum (strain ATCC 49652 / DSM 12025 / NBRC 103806 / TLS) (Chlorobium tepidum)).